The following is a 352-amino-acid chain: Homeobox protein Mohawk (352 aa).

The interval 19-53 is disordered; it reads GASERERGGRPYSGVLDSPHARPEVGIADGPPLKD. Residues 71-132 constitute a DNA-binding region (homeobox; TALE-type); that stretch reads VRHKRQALQD…NARRRLKNTV (62 aa). Disordered regions lie at residues 157–194 and 245–272; these read LSVS…IKSE and TRQR…SETE.

This sequence belongs to the TALE/IRO homeobox family.

It localises to the nucleus. In terms of biological role, may act as a morphogenetic regulator of cell adhesion. This is Homeobox protein Mohawk (MKX) from Pongo abelii (Sumatran orangutan).